Consider the following 160-residue polypeptide: Transmembrane protein 220 (160 aa).

A run of 5 helical transmembrane segments spans residues 3-23 (PALWRACNGLMAAFFALAALV), 30-50 (AEVWVVVYTIPAVLTLLVGLN), 62-82 (ISAIHILFCTVWAVGLASYLL), 100-120 (GLVIITAWIILCHSSSKNPVG), and 125-145 (LAIAIVITLFPFISWVYIYIN).

The protein localises to the membrane. The polypeptide is Transmembrane protein 220 (TMEM220) (Homo sapiens (Human)).